The following is a 499-amino-acid chain: Protein adenylyltransferase Fic (499 aa).

The helical transmembrane segment at 38 to 58 (FHYFVIFASGSLFSGLMFGLL) threads the bilayer. TPR repeat units follow at residues 126–159 (ALSSLKVAIEMKTMGKDDKAARLFQHALALSPKH) and 160–194 (PEILTKYGEFLEHNQQDVVRADHYYYQALTVNPSH). Positions 251 to 256 (SVGIEG) match the Inhibitory (S/T)XXXE(G/N) motif motif. ATP-binding positions include E255 and 337 to 340 (VGGH). Residues 306–441 (ITLKDILEIH…IRPFVRFIAD (136 aa)) form the Fido domain. Residue H384 is part of the active site. ATP is bound by residues 388 to 395 (DGNGRTSR), 420 to 421 (YY), and N428.

This sequence belongs to the fic family. Homodimer.

The protein localises to the membrane. The enzyme catalyses L-tyrosyl-[protein] + ATP = O-(5'-adenylyl)-L-tyrosyl-[protein] + diphosphate. The catalysed reaction is L-threonyl-[protein] + ATP = 3-O-(5'-adenylyl)-L-threonyl-[protein] + diphosphate. It carries out the reaction 3-O-(5'-adenylyl)-L-threonyl-[protein] + H2O = L-threonyl-[protein] + AMP + H(+). Its activity is regulated as follows. The side chain of Glu-255 determines which of the two opposing activities (AMPylase or de-AMPylase) will take place. In response to endoplasmic reticulum stress, mediates de-AMPylase activity. Adenylyltransferase activity is inhibited by the inhibitory helix present at the N-terminus: Glu-255 binds ATP and competes with ATP-binding at Arg-395, thereby preventing adenylyltransferase activity. In unstressed cells, disengagement of Glu-255 promotes adenylyltransferase activity. Activation dissociates ATP-binding from Glu-255, allowing ordered binding of the entire ATP moiety with the alpha-phosphate in an orientation that is productive for accepting an incoming target hydroxyl side chain. Its function is as follows. Protein that can both mediate the addition of adenosine 5'-monophosphate (AMP) to specific residues of target proteins (AMPylation), and the removal of the same modification from target proteins (de-AMPylation), depending on the context. The side chain of Glu-255 determines which of the two opposing activities (AMPylase or de-AMPylase) will take place. Acts as a key regulator of the unfolded protein response (UPR) by mediating AMPylation or de-AMPylation of Hsc70-3/BiP. In unstressed cells, acts as an adenylyltransferase by mediating AMPylation of Hsc70-3/BiP at 'Thr-518', thereby inactivating it. In response to endoplasmic reticulum stress, acts as a phosphodiesterase by mediating removal of ATP (de-AMPylation) from Hsc70-3/BiP at 'Thr-518', leading to restore HSPA5/BiP activity. This is Protein adenylyltransferase Fic from Aedes aegypti (Yellowfever mosquito).